The chain runs to 215 residues: ATP-dependent dethiobiotin synthetase BioD (215 aa).

An ATP-binding site is contributed by aspartate 13 to valine 18. Residue threonine 17 participates in Mg(2+) binding. Lysine 38 is an active-site residue. Position 42 (threonine 42) interacts with substrate. ATP is bound by residues aspartate 50, glutamate 115–glycine 118, and asparagine 175–histidine 176. Residues aspartate 50 and glutamate 115 each contribute to the Mg(2+) site.

This sequence belongs to the dethiobiotin synthetase family. In terms of assembly, homodimer. The cofactor is Mg(2+).

It localises to the cytoplasm. The enzyme catalyses (7R,8S)-7,8-diammoniononanoate + CO2 + ATP = (4R,5S)-dethiobiotin + ADP + phosphate + 3 H(+). The protein operates within cofactor biosynthesis; biotin biosynthesis; biotin from 7,8-diaminononanoate: step 1/2. In terms of biological role, catalyzes a mechanistically unusual reaction, the ATP-dependent insertion of CO2 between the N7 and N8 nitrogen atoms of 7,8-diaminopelargonic acid (DAPA, also called 7,8-diammoniononanoate) to form a ureido ring. The chain is ATP-dependent dethiobiotin synthetase BioD from Neisseria gonorrhoeae (strain NCCP11945).